The primary structure comprises 525 residues: Light-independent protochlorophyllide reductase subunit B (525 aa).

Asp-36 is a binding site for [4Fe-4S] cluster. Catalysis depends on Asp-290, which acts as the Proton donor. Position 425–426 (425–426) interacts with substrate; sequence GL.

It belongs to the ChlB/BchB/BchZ family. In terms of assembly, protochlorophyllide reductase is composed of three subunits; ChlL, ChlN and ChlB. Forms a heterotetramer of two ChlB and two ChlN subunits. The cofactor is [4Fe-4S] cluster.

It carries out the reaction chlorophyllide a + oxidized 2[4Fe-4S]-[ferredoxin] + 2 ADP + 2 phosphate = protochlorophyllide a + reduced 2[4Fe-4S]-[ferredoxin] + 2 ATP + 2 H2O. The protein operates within porphyrin-containing compound metabolism; chlorophyll biosynthesis (light-independent). Component of the dark-operative protochlorophyllide reductase (DPOR) that uses Mg-ATP and reduced ferredoxin to reduce ring D of protochlorophyllide (Pchlide) to form chlorophyllide a (Chlide). This reaction is light-independent. The NB-protein (ChlN-ChlB) is the catalytic component of the complex. This is Light-independent protochlorophyllide reductase subunit B from Prochlorococcus marinus (strain MIT 9312).